We begin with the raw amino-acid sequence, 165 residues long: Crossover junction endodeoxyribonuclease RuvC (165 aa).

Active-site residues include aspartate 7, glutamate 67, and aspartate 140. Mg(2+) is bound by residues aspartate 7, glutamate 67, and aspartate 140.

It belongs to the RuvC family. In terms of assembly, homodimer which binds Holliday junction (HJ) DNA. The HJ becomes 2-fold symmetrical on binding to RuvC with unstacked arms; it has a different conformation from HJ DNA in complex with RuvA. In the full resolvosome a probable DNA-RuvA(4)-RuvB(12)-RuvC(2) complex forms which resolves the HJ. The cofactor is Mg(2+).

The protein resides in the cytoplasm. It carries out the reaction Endonucleolytic cleavage at a junction such as a reciprocal single-stranded crossover between two homologous DNA duplexes (Holliday junction).. The RuvA-RuvB-RuvC complex processes Holliday junction (HJ) DNA during genetic recombination and DNA repair. Endonuclease that resolves HJ intermediates. Cleaves cruciform DNA by making single-stranded nicks across the HJ at symmetrical positions within the homologous arms, yielding a 5'-phosphate and a 3'-hydroxyl group; requires a central core of homology in the junction. The consensus cleavage sequence is 5'-(A/T)TT(C/G)-3'. Cleavage occurs on the 3'-side of the TT dinucleotide at the point of strand exchange. HJ branch migration catalyzed by RuvA-RuvB allows RuvC to scan DNA until it finds its consensus sequence, where it cleaves and resolves the cruciform DNA. This is Crossover junction endodeoxyribonuclease RuvC from Caldanaerobacter subterraneus subsp. tengcongensis (strain DSM 15242 / JCM 11007 / NBRC 100824 / MB4) (Thermoanaerobacter tengcongensis).